A 354-amino-acid polypeptide reads, in one-letter code: Kelch domain-containing protein 8B (354 aa).

8 Kelch repeats span residues 1–31, 32–79, 81–127, 128–175, 176–222, 224–281, 282–329, and 331–354; these read MAAG…HQDG, HLLV…VLGK, VLVV…ERDG, MVYA…LHGN, KIYV…MAEG, VFSL…SLGG, NIVA…QAGP, and LFVI…RDGV.

It localises to the cytoplasm. The protein resides in the midbody. In terms of biological role, involved in pinching off the separated nuclei at the cleavage furrow and in cytokinesis. Required for mitotic integrity and maintenance of chromosomal stability. Protects cells against mitotic errors, centrosomal amplification, micronucleus formation and aneuploidy. Plays a key role of midbody function involving abscission of the daughter cells during cytokinesis and appropriate chromosomal and nuclear segregation into the daughter cells. This Mus musculus (Mouse) protein is Kelch domain-containing protein 8B (Klhdc8b).